The chain runs to 472 residues: Serine/threonine-protein kinase sax-1 (472 aa).

Residues 87 to 381 (FESLKVIGRG…LDEIKQCPFF (295 aa)) enclose the Protein kinase domain. ATP-binding positions include 93-101 (IGRGAFGEV) and Lys116. The active-site Proton acceptor is Asp210. The AGC-kinase C-terminal domain occupies 382 to 452 (RRIDWNHIRE…KRFDGLTQKM (71 aa)).

Belongs to the protein kinase superfamily. AGC Ser/Thr protein kinase family. Mg(2+) is required as a cofactor.

It localises to the cytoplasm. It is found in the nucleus. It catalyses the reaction L-seryl-[protein] + ATP = O-phospho-L-seryl-[protein] + ADP + H(+). It carries out the reaction L-threonyl-[protein] + ATP = O-phospho-L-threonyl-[protein] + ADP + H(+). In terms of biological role, acts with sax-2 to restrict the growth of both primary and secondary neurites. Regulates mechanosensory tiling by controlling the termination point of sensory dendrites. This Caenorhabditis briggsae protein is Serine/threonine-protein kinase sax-1.